The primary structure comprises 201 residues: Superoxide dismutase [Mn] (201 aa).

Residues His27, His81, Asp163, and His167 each coordinate Mn(2+).

This sequence belongs to the iron/manganese superoxide dismutase family. In terms of assembly, homodimer. The cofactor is Mn(2+).

It localises to the secreted. The enzyme catalyses 2 superoxide + 2 H(+) = H2O2 + O2. In terms of biological role, destroys superoxide anion radicals which are normally produced within the cells and which are toxic to biological systems. In Streptococcus pyogenes serotype M18 (strain MGAS8232), this protein is Superoxide dismutase [Mn] (sodA).